The sequence spans 642 residues: Dihydrolipoyllysine-residue acetyltransferase component of pyruvate dehydrogenase complex, mitochondrial (642 aa).

The transit peptide at 1-85 directs the protein to the mitochondrion; the sequence is MWRVCARRAR…LLGSPSRRSY (85 aa). The tract at residues 80-99 is disordered; sequence PSRRSYSLPPHQKVPLPSLS. 2 consecutive Lipoyl-binding domains span residues 90–166 and 217–293; these read HQKV…CITV and HMQI…CIIV. A Phosphoserine modification is found at S99. N6-lipoyllysine is present on residues K131 and K258. The segment at 313–346 is disordered; the sequence is LKPQAAPPAPPPVAAVPPTPQPVAPTPSAAPAGP. The span at 317–337 shows a compositional bias: pro residues; sequence AAPPAPPPVAAVPPTPQPVAP. The region spanning 351–388 is the Peripheral subunit-binding (PSBD) domain; the sequence is FVSPLAKKLAAEKGIDLTQVKGTGPEGRIIKKDIDSFV. A CoA-binding site is contributed by R456. N6-acetyllysine is present on K461. K468 is modified (N6-succinyllysine). Residue S470 participates in CoA binding. The residue at position 542 (K542) is an N6-succinyllysine. Residues S561, N562, and G586 each coordinate CoA. Active-site residues include H615 and D619.

The protein belongs to the 2-oxoacid dehydrogenase family. As to quaternary structure, part of the pyruvate dehydrogenase complex (PDHc) that is a multi-enzyme complex composed of multiple copies of three enzymes, pyruvate dehydrogenase (subunits PDH1A and PDHB, E1 component), dihydrolipoamide acetyltransferase (DLAT, E2 component), and dihydrolipoamide dehydrogenase (DLD, E3 component) to which is added an additional protein the E3-binding protein (PDHX, E3BP). In terms of structural architecture, the E2 and E3BP components assemble into a 60meric central core with icosahedral symmetry. The central core is decorated with E1 and E3 proteins. Currently, two alternative models for the E2:E3BP stoichiometry are considered as being either 48:12 (E2(48)-E3BP(12)) or 40:20 (E2(40)-E3BP(20)). Interacts with PDK2 and PDK3. Interacts with SIRT4. Interacts with PDHB. The cofactor is (R)-lipoate. Delipoylated at Lys-131 and Lys-258 by SIRT4, delipoylation decreases the PHD complex activity.

The protein resides in the mitochondrion matrix. It carries out the reaction N(6)-[(R)-dihydrolipoyl]-L-lysyl-[protein] + acetyl-CoA = N(6)-[(R)-S(8)-acetyldihydrolipoyl]-L-lysyl-[protein] + CoA. Functionally, as part of the pyruvate dehydrogenase complex, catalyzes the transfers of an acetyl group to a lipoic acid moiety. The pyruvate dehydrogenase complex, catalyzes the overall conversion of pyruvate to acetyl-CoA and CO(2), and thereby links cytoplasmic glycolysis and the mitochondrial tricarboxylic acid (TCA) cycle. In Mus musculus (Mouse), this protein is Dihydrolipoyllysine-residue acetyltransferase component of pyruvate dehydrogenase complex, mitochondrial.